An 818-amino-acid polypeptide reads, in one-letter code: Phosphoenolpyruvate synthase (818 aa).

His-442 acts as the Tele-phosphohistidine intermediate in catalysis. Substrate-binding residues include Arg-532, Arg-601, Glu-703, Gly-724, Ser-725, Asn-726, and Asp-727. Glu-703 provides a ligand contact to Mg(2+). Residue Asp-727 participates in Mg(2+) binding. The active-site Proton donor is Cys-774.

The protein belongs to the PEP-utilizing enzyme family. The cofactor is Mg(2+).

It carries out the reaction pyruvate + ATP + H2O = phosphoenolpyruvate + AMP + phosphate + 2 H(+). Its pathway is carbohydrate biosynthesis; gluconeogenesis. Functionally, catalyzes the phosphorylation of pyruvate to phosphoenolpyruvate. This Synechocystis sp. (strain ATCC 27184 / PCC 6803 / Kazusa) protein is Phosphoenolpyruvate synthase (ppsA).